Consider the following 196-residue polypeptide: Cilia- and flagella-associated protein 107 (196 aa).

Mn regions lie at residues 46–61 and 96–108; these read TPQTIYRKEYVPFPGH and ISTYDDHYNRHNY. Residues 168–196 form a disordered region; that stretch reads YPRPPAGAMSRREHAIPVPPPRLQPVPHF. Pro residues predominate over residues 184–196; sequence PVPPPRLQPVPHF.

Microtubule inner protein component of sperm flagellar doublet microtubules. In terms of tissue distribution, expressed in trachea multiciliated cells.

It localises to the cytoplasm. It is found in the cytoskeleton. The protein localises to the cilium axoneme. The protein resides in the flagellum axoneme. In terms of biological role, microtubule inner protein (MIP) part of the dynein-decorated doublet microtubules (DMTs) in cilia axoneme, which is required for motile cilia beating. The protein is Cilia- and flagella-associated protein 107 of Bos taurus (Bovine).